A 185-amino-acid chain; its full sequence is Biofilm operon icaADBC HTH-type negative transcriptional regulator IcaR (185 aa).

Positions 1 to 59 (MKDKIIDNAITLFSEKGYDGTTLDDISKSVNIKKASLYYHYDNKEEIYRKSVENCFNYF) constitute an HTH tetR-type domain. Positions 22-41 (TLDDISKSVNIKKASLYYHY) form a DNA-binding region, H-T-H motif.

In terms of assembly, homodimer.

Represses transcription of the icaADBC operon necessary for biofilm production. This is Biofilm operon icaADBC HTH-type negative transcriptional regulator IcaR (icaR) from Staphylococcus epidermidis (strain ATCC 35984 / DSM 28319 / BCRC 17069 / CCUG 31568 / BM 3577 / RP62A).